We begin with the raw amino-acid sequence, 197 residues long: uncharacterized protein (197 aa).

Residues 1–10 (MKNNYTSLKS) show a composition bias toward polar residues. 2 disordered regions span residues 1–46 (MKNN…PPYS) and 54–73 (LVPE…NVER). A compositionally biased stretch (basic and acidic residues) spans 18–37 (LKTGHEIDLEKGPLPEHNSE). Residues 58 to 69 (DSSTGPTETANP) show a composition bias toward polar residues. Helical transmembrane passes span 83 to 105 (NIYS…FTAW) and 120 to 142 (AFFV…EPGL).

The protein belongs to the WTF family.

The protein localises to the endoplasmic reticulum membrane. This is an uncharacterized protein from Schizosaccharomyces pombe (strain 972 / ATCC 24843) (Fission yeast).